The following is a 326-amino-acid chain: Beta-ketoacyl-[acyl-carrier-protein] synthase III (326 aa).

Catalysis depends on residues cysteine 120 and histidine 253. An ACP-binding region spans residues 254–258 (QANIR). Asparagine 283 is a catalytic residue.

The protein belongs to the thiolase-like superfamily. FabH family. In terms of assembly, homodimer.

Its subcellular location is the cytoplasm. The enzyme catalyses malonyl-[ACP] + acetyl-CoA + H(+) = 3-oxobutanoyl-[ACP] + CO2 + CoA. It functions in the pathway lipid metabolism; fatty acid biosynthesis. In terms of biological role, catalyzes the condensation reaction of fatty acid synthesis by the addition to an acyl acceptor of two carbons from malonyl-ACP. Catalyzes the first condensation reaction which initiates fatty acid synthesis and may therefore play a role in governing the total rate of fatty acid production. Possesses both acetoacetyl-ACP synthase and acetyl transacylase activities. Its substrate specificity determines the biosynthesis of branched-chain and/or straight-chain of fatty acids. This chain is Beta-ketoacyl-[acyl-carrier-protein] synthase III, found in Cupriavidus necator (strain ATCC 17699 / DSM 428 / KCTC 22496 / NCIMB 10442 / H16 / Stanier 337) (Ralstonia eutropha).